The following is a 270-amino-acid chain: Undecaprenyl-diphosphatase (270 aa).

The next 7 helical transmembrane spans lie at 1-21 (MTWW…FIPV), 92-112 (FRLG…YVLF), 119-139 (AFGS…LLLL), 150-170 (LSGV…VPGI), 193-213 (FSFL…GLEL), 223-243 (LSLG…IYVV), and 250-270 (GNLQ…LWLL).

Belongs to the UppP family.

It is found in the cell inner membrane. It catalyses the reaction di-trans,octa-cis-undecaprenyl diphosphate + H2O = di-trans,octa-cis-undecaprenyl phosphate + phosphate + H(+). Its function is as follows. Catalyzes the dephosphorylation of undecaprenyl diphosphate (UPP). Confers resistance to bacitracin. This is Undecaprenyl-diphosphatase from Salinibacter ruber (strain DSM 13855 / M31).